The following is a 338-amino-acid chain: UPF0324 membrane protein TauZ (338 aa).

The next 10 helical transmembrane spans lie at 12–31, 36–55, 75–92, 96–118, 125–147, 162–184, 191–213, 223–245, 258–280, and 315–337; these read IEAA…TAQF, YGAP…NFLA, LGVA…LAAL, AIAL…SRLV, ALLT…AAVL, LSVT…FFGF, VFLG…IGPE, LIRV…ARGL, PGFV…PAAV, and AIAL…LHVL.

Belongs to the UPF0324 family.

It is found in the cell membrane. The sequence is that of UPF0324 membrane protein TauZ (tauZ) from Paracoccus denitrificans.